Consider the following 226-residue polypeptide: Transcriptional regulatory protein PcoR (226 aa).

The 115-residue stretch at R3–L117 folds into the Response regulatory domain. D52 bears the 4-aspartylphosphate mark. Residues A125–I223 constitute a DNA-binding region (ompR/PhoB-type).

Phosphorylated by PcoS.

It is found in the cytoplasm. In terms of biological role, probable member of a two-component regulatory system PcoS/PcoR. May be involved in the activation of copper resistance gene operon pcoABCD by binding to a specific site on the cop operon promoter (copper box). The sequence is that of Transcriptional regulatory protein PcoR (pcoR) from Escherichia coli.